Reading from the N-terminus, the 199-residue chain is MAFNIESLLEKKSNPVEEGNDFEEENDSEKNGEEDEEEEEKNVIDGWTNMATSQLAMFAIANDLRTPTLVELQMLLGVSARKHDYKRSRKSVCERKPRQAYSARQLDRLETEFQTDKYLSVNKRIQLSQTLNLTETQIKTWFQNRRTKWKKQLTSSIRQMVKDAPTSTSVGVPFQSLLTPPTPPTTLACHVNSLFACEQ.

The disordered stretch occupies residues 1 to 42 (MAFNIESLLEKKSNPVEEGNDFEEENDSEKNGEEDEEEEEKN). The segment covering 18–40 (EGNDFEEENDSEKNGEEDEEEEE) has biased composition (acidic residues). The segment at residues 94 to 153 (ERKPRQAYSARQLDRLETEFQTDKYLSVNKRIQLSQTLNLTETQIKTWFQNRRTKWKKQL) is a DNA-binding region (homeobox).

The protein localises to the nucleus. Its function is as follows. Probable transcription factor. Required for MC motor neuron differentiation and function, including role in modulating pharyngeal pumping. Regulates gene expression of FMRFamide-like neuropeptide flp-2 in MC motor neurons. May act downstream of transcription factor pha-4. The polypeptide is Homeobox protein ceh-19 (ceh-19) (Caenorhabditis elegans).